The chain runs to 556 residues: Formate--tetrahydrofolate ligase (556 aa).

65–72 (TPAGEGKT) contacts ATP.

Belongs to the formate--tetrahydrofolate ligase family.

It catalyses the reaction (6S)-5,6,7,8-tetrahydrofolate + formate + ATP = (6R)-10-formyltetrahydrofolate + ADP + phosphate. It participates in one-carbon metabolism; tetrahydrofolate interconversion. The sequence is that of Formate--tetrahydrofolate ligase from Proteus mirabilis (strain HI4320).